A 168-amino-acid polypeptide reads, in one-letter code: Transcriptional regulator MraZ (168 aa).

SpoVT-AbrB domains are found at residues 8–51 (EYNQ…GGDR) and 90–140 (ALNM…KADT).

The protein belongs to the MraZ family. In terms of assembly, forms oligomers.

The protein resides in the cytoplasm. The protein localises to the nucleoid. The sequence is that of Transcriptional regulator MraZ from Cereibacter sphaeroides (strain ATCC 17025 / ATH 2.4.3) (Rhodobacter sphaeroides).